The primary structure comprises 215 residues: Probable transaldolase (215 aa).

The active-site Schiff-base intermediate with substrate is Lys83.

The protein belongs to the transaldolase family. Type 3B subfamily.

It is found in the cytoplasm. The enzyme catalyses D-sedoheptulose 7-phosphate + D-glyceraldehyde 3-phosphate = D-erythrose 4-phosphate + beta-D-fructose 6-phosphate. Its pathway is carbohydrate degradation; pentose phosphate pathway; D-glyceraldehyde 3-phosphate and beta-D-fructose 6-phosphate from D-ribose 5-phosphate and D-xylulose 5-phosphate (non-oxidative stage): step 2/3. Its function is as follows. Transaldolase is important for the balance of metabolites in the pentose-phosphate pathway. This Streptococcus agalactiae serotype III (strain NEM316) protein is Probable transaldolase.